The following is a 739-amino-acid chain: MDAARDGRPERRRAVSGTYRTHPFQRPSARRSAGRPARCGRRGRGAPRVRRPRPYFQRPPDEDTSEDENVYDYIDGDSSDSADDYDSDYFTANRGPNHGAGDAMDTDAPPERAPEGGAPQDYLTAHLRAIEVLPESAPHRSLLERTARTVYAQQFPPRDLSAGSKAPAQRARRSLRGFPRGGGGGQEPGPDDEGDDAADLREDLVPDEAYAHLERDERLSEGPPLLNMEAAAAAAGERSVVEELFTYAPAQPQVEVPLPRILEGRVRPSAFFAQMSLDALCRTPPNDQRVARERRAWEMAGTPHGLLITTWSTVDPEFSIGGMYVGAPEGTRPRLVWRRAMKQAMALQYRLGVGGLCRAVDGAACRPLRRCSFWRDALLRECATAIFCRGRGARAAPRRLPRPAVGLLAATQFTPPDASPHATLFRGSMGSLIYWHELRVMLTAVPALCARYAGAGLQSAELYLLALRHSEAPGYTANERYALSAYLTLFVALAERGLRWLYLAGAHLLGPHPTAAAFREVRAKIPYERLPLGSATLHDAEVETVDSATFQEALAFSALAHVYGEAYVAVRTATTLLMAEYAVHAERRDVRQMTAAFLGVGLIAQRLMGSLNLLLNCVAGAAVYGGRRVTVREGTLARYSLLADAALPLVRPVFLVEFREARDGVMRELRLRPVASPPLAGKRRVMELYLSLDSIEALVGREPLGSRPVLGPLVDIAEALADHPHLVTGDGRGPRLGGR.

The segment covering 1–13 (MDAARDGRPERRR) has biased composition (basic and acidic residues). Disordered stretches follow at residues 1–123 (MDAA…QDYL) and 154–198 (QFPP…DDAA). A Nuclear localization signal motif is present at residues 10–30 (ERRRAVSGTYRTHPFQRPSAR). Residues 28–53 (SARRSAGRPARCGRRGRGAPRVRRPR) show a composition bias toward basic residues. The span at 62 to 87 (EDTSEDENVYDYIDGDSSDSADDYDS) shows a compositional bias: acidic residues. The Nuclear export signal signature appears at 94–121 (RGPNHGAGDAMDTDAPPERAPEGGAPQD). Residues 483 to 493 (LSAYLTLFVAL) carry the Nuclear export signal motif.

This sequence belongs to the alphaherpesvirinae HHV-1 UL47 family. Interacts with US3 kinase. Interacts with UL31 and UL34; these interactions seem important for efficient virion nuclear egress. Interacts with UL41/VHS. Interacts with host DDB1. Monoubiquitinated. In terms of processing, phosphorylated by US3. This phosphorylation is required for proper nuclear localization.

The protein localises to the virion tegument. It localises to the host nucleus. Its subcellular location is the host cytoplasm. Tegument protein that can bind to various RNA transcripts. Plays a role in the attenuation of selective viral and cellular mRNA degradation by modulating the activity of host shutoff RNase UL41/VHS. Also plays a role in the primary envelopment of virions in the perinuclear space, probably by interacting with two nuclear egress proteins UL31 and UL34. This Bovine herpesvirus 1.1 (strain Cooper) (BoHV-1) protein is Tegument protein UL47.